Here is a 118-residue protein sequence, read N- to C-terminus: NADH-ubiquinone oxidoreductase chain 3 (118 aa).

Helical transmembrane passes span I9–A29, L62–V82, and I87–L107.

Belongs to the complex I subunit 3 family.

The protein localises to the mitochondrion membrane. It carries out the reaction a ubiquinone + NADH + 5 H(+)(in) = a ubiquinol + NAD(+) + 4 H(+)(out). Functionally, core subunit of the mitochondrial membrane respiratory chain NADH dehydrogenase (Complex I) that is believed to belong to the minimal assembly required for catalysis. Complex I functions in the transfer of electrons from NADH to the respiratory chain. The immediate electron acceptor for the enzyme is believed to be ubiquinone. The protein is NADH-ubiquinone oxidoreductase chain 3 (ND3) of Triticum aestivum (Wheat).